Here is a 244-residue protein sequence, read N- to C-terminus: 3-oxoacyl-[acyl-carrier-protein] reductase FabG (244 aa).

NADP(+)-binding positions include 12-15, Thr37, 59-60, and Asn86; these read GASR and NV. Ser138 lines the substrate pocket. Catalysis depends on Tyr151, which acts as the Proton acceptor. NADP(+) contacts are provided by residues 151-155 and Ile184; that span reads YAAAK.

Belongs to the short-chain dehydrogenases/reductases (SDR) family. Homotetramer.

It catalyses the reaction a (3R)-hydroxyacyl-[ACP] + NADP(+) = a 3-oxoacyl-[ACP] + NADPH + H(+). Its pathway is lipid metabolism; fatty acid biosynthesis. Functionally, catalyzes the NADPH-dependent reduction of beta-ketoacyl-ACP substrates to beta-hydroxyacyl-ACP products, the first reductive step in the elongation cycle of fatty acid biosynthesis. The chain is 3-oxoacyl-[acyl-carrier-protein] reductase FabG (fabG) from Vibrio harveyi (Beneckea harveyi).